Consider the following 382-residue polypeptide: O-antigen polymerase (382 aa).

The Cytoplasmic segment spans residues 1-3 (MNN). The helical transmembrane segment at 4 to 22 (INKIFITFLCIELIIGGGG) threads the bilayer. Topologically, residues 23 to 34 (RLLEPLGIFPLR) are periplasmic. A helical transmembrane segment spans residues 35–54 (YLLFVFSFILLIFNLVTFNF). Over 55–62 (SITQKCVS) the chain is Cytoplasmic. The helical transmembrane segment at 63 to 81 (LFIWLLLFPFYGFFVGLLA) threads the bilayer. Topologically, residues 82-94 (GNKINDILFDVQP) are periplasmic. The helical transmembrane segment at 95–112 (YLFMLSLIYLFTLRYTLK) threads the bilayer. Topologically, residues 113-125 (VFSCEIFIKIVNA) are cytoplasmic. Residues 126-146 (FALYGSLLYISYIILLNFGLL) form a helical membrane-spanning segment. The Periplasmic portion of the chain corresponds to 147–167 (NFNLIYEHLSLTSEFFFRPDG). The helical transmembrane segment at 168-187 (AFFSKSFYFFGVGAIISFVD) threads the bilayer. Over 188-189 (KK) the chain is Cytoplasmic. The helical transmembrane segment at 190–206 (YLKCLIIVLAILLTESR) threads the bilayer. Residues 207–208 (GV) are Periplasmic-facing. The helical transmembrane segment at 209–226 (LLFTTLSLLLASFKLHKL) threads the bilayer. Over 227-229 (YLN) the chain is Cytoplasmic. A helical transmembrane segment spans residues 230–247 (TIIIILGSVLFIIMLYMV). Residues 248-300 (GSRSEDSDSVRFNDLYFYYKNVDLATFLFGRGFGSFILDRLRIEIVPLEILQK) lie on the Periplasmic side of the membrane. Residues 301 to 318 (TGVIGVFISLVPMLLIFL) form a helical membrane-spanning segment. Residues 319-329 (KGYFLNSTKTS) lie on the Cytoplasmic side of the membrane. A helical transmembrane segment spans residues 330–349 (LMMSLILFFSITVSITNPFL). The Periplasmic portion of the chain corresponds to 350–352 (FTP). A helical transmembrane segment spans residues 353-370 (MGIFIIGVVVLWVFSIEN). Residues 371–382 (IQISNNLTSGAK) lie on the Cytoplasmic side of the membrane.

The protein resides in the cell inner membrane. The catalysed reaction is n lipid-linked O-antigen repeat units = a lipid-linked O antigen + (n-1) polyisoprenyl diphosphate.. It participates in bacterial outer membrane biogenesis; LPS O-antigen biosynthesis. Polymerase involved in the biosynthesis of the lipopolysaccharide (LPS). Catalyzes the polymerization of the O-antigen repeat units on the periplasmic face of the inner membrane, leading to the formation of the lipid-linked O-antigen molecule. In Shigella flexneri, this protein is O-antigen polymerase.